A 49-amino-acid chain; its full sequence is Large ribosomal subunit protein bL33A (49 aa).

The protein belongs to the bacterial ribosomal protein bL33 family.

In Bacillus licheniformis (strain ATCC 14580 / DSM 13 / JCM 2505 / CCUG 7422 / NBRC 12200 / NCIMB 9375 / NCTC 10341 / NRRL NRS-1264 / Gibson 46), this protein is Large ribosomal subunit protein bL33A.